We begin with the raw amino-acid sequence, 473 residues long: Photosystem II CP43 reaction center protein (473 aa).

The propeptide occupies 1 to 14 (MKTLYSLRRFYPVE). Threonine 15 is modified (N-acetylthreonine). Position 15 is a phosphothreonine (threonine 15). 5 helical membrane-spanning segments follow: residues 69 to 93 (LFEV…PHLA), 134 to 155 (LLGP…KDRN), 178 to 200 (KALY…RRIT), 255 to 275 (KPFA…LSYS), and 291 to 312 (WFNN…ASQA). Glutamate 367 contributes to the [CaMn4O5] cluster binding site. A helical membrane pass occupies residues 447–471 (RARAAAAGFEKGIDRDFEPVLFMTP).

This sequence belongs to the PsbB/PsbC family. PsbC subfamily. In terms of assembly, PSII is composed of 1 copy each of membrane proteins PsbA, PsbB, PsbC, PsbD, PsbE, PsbF, PsbH, PsbI, PsbJ, PsbK, PsbL, PsbM, PsbT, PsbX, PsbY, PsbZ, Psb30/Ycf12, at least 3 peripheral proteins of the oxygen-evolving complex and a large number of cofactors. It forms dimeric complexes. Binds multiple chlorophylls and provides some of the ligands for the Ca-4Mn-5O cluster of the oxygen-evolving complex. It may also provide a ligand for a Cl- that is required for oxygen evolution. PSII binds additional chlorophylls, carotenoids and specific lipids. is required as a cofactor.

It localises to the plastid. The protein resides in the chloroplast thylakoid membrane. One of the components of the core complex of photosystem II (PSII). It binds chlorophyll and helps catalyze the primary light-induced photochemical processes of PSII. PSII is a light-driven water:plastoquinone oxidoreductase, using light energy to abstract electrons from H(2)O, generating O(2) and a proton gradient subsequently used for ATP formation. The polypeptide is Photosystem II CP43 reaction center protein (Nuphar advena (Common spatterdock)).